Reading from the N-terminus, the 132-residue chain is Small ribosomal subunit protein uS8 (132 aa).

The protein belongs to the universal ribosomal protein uS8 family. In terms of assembly, part of the 30S ribosomal subunit. Contacts proteins S5 and S12.

One of the primary rRNA binding proteins, it binds directly to 16S rRNA central domain where it helps coordinate assembly of the platform of the 30S subunit. This is Small ribosomal subunit protein uS8 from Stenotrophomonas maltophilia (strain K279a).